Consider the following 655-residue polypeptide: Putative phagocytic receptor 1c (655 aa).

The signal sequence occupies residues 1–20 (MLNIIVVLLLLFFSNNVIDS). Residues 146 to 173 (SNSKSSEITSPPSSPSSSSSSSSSPSSS) are compositionally biased toward low complexity. Positions 146–185 (SNSKSSEITSPPSSPSSSSSSSSSPSSSIEEEDDDDTEND) are disordered. Residues 174 to 183 (IEEEDDDDTE) are compositionally biased toward acidic residues. 9 helical membrane passes run 300 to 320 (IDII…AIIL), 359 to 379 (FSII…LMVF), 387 to 407 (IATP…TGIF), 428 to 448 (SVIT…IGYF), 461 to 481 (IGTV…CSLL), 518 to 538 (MILG…FFLS), 550 to 570 (LSFA…NMII), 587 to 607 (LLGP…FGIT), and 619 to 639 (FMFS…IGFL).

It belongs to the nonaspanin (TM9SF) (TC 9.A.2) family.

Its subcellular location is the membrane. This Dictyostelium discoideum (Social amoeba) protein is Putative phagocytic receptor 1c (phg1c).